The primary structure comprises 237 residues: U2 small nuclear ribonucleoprotein A' (237 aa).

LRR repeat units follow at residues 53-74 (RTNI…GHND), 75-95 (TVHT…SRLP), and 97-118 (YLVN…QGLR). Positions 132-170 (NVICHKEQYRETVIALCPQLAVLDGERVRQAERQAAPQN) constitute an LRRCT domain. The segment at 161 to 182 (QAERQAAPQNEKTDTPTEGPQP) is disordered.

Belongs to the U2 small nuclear ribonucleoprotein A family. Associated with the spliceosome.

The protein resides in the nucleus. Functionally, involved in pre-mRNA splicing. The polypeptide is U2 small nuclear ribonucleoprotein A' (LEA1) (Eremothecium gossypii (strain ATCC 10895 / CBS 109.51 / FGSC 9923 / NRRL Y-1056) (Yeast)).